The following is a 222-amino-acid chain: Beta-casein (222 aa).

The N-terminal stretch at 1-15 is a signal peptide; that stretch reads MKVLILACLVALALA. Residue T27 is modified to Phosphothreonine. Phosphoserine is present on residues S30, S32, S33, and S34.

It belongs to the beta-casein family. In terms of tissue distribution, mammary gland specific. Secreted in milk.

The protein resides in the secreted. Functionally, important role in determination of the surface properties of the casein micelles. This is Beta-casein (CSN2) from Ovis aries (Sheep).